The following is a 110-amino-acid chain: Protein YcgL (110 aa).

Positions 14–98 (MFCVIYRSSK…PPEDLLKQHL (85 aa)) constitute a YcgL domain. The tract at residues 87–110 (PPPPEDLLKQHLSSVGQNTSPADR) is disordered. Positions 97 to 110 (HLSSVGQNTSPADR) are enriched in polar residues.

The protein is Protein YcgL of Salmonella choleraesuis (strain SC-B67).